The sequence spans 404 residues: Cytoplasmic 60S subunit biogenesis factor REI1 homolog 1 (404 aa).

C2H2-type zinc fingers lie at residues 4 to 28 and 68 to 92; these read LTCN…SDWH and YTCA…SRSH. The segment at 119–169 is disordered; it reads QHRGSIDDDSEDEWVEVDSDEELAAEEASDSLSKLNVNESGSAEDMDDDGD. Acidic residues-rich tracts occupy residues 125 to 147 and 160 to 169; these read DDDS…EEAS and SAEDMDDDGD. C2H2-type zinc fingers lie at residues 178–201 and 229–256; these read TCCL…HKHH and FMCL…AKSH.

The protein belongs to the REI1 family. As to quaternary structure, can form homodimer. Interacts with RLP24, RPL24A, RPL24B, EBP1 and JJJ1.

It localises to the cytoplasm. Pre-60S-associated factor involved in the cytoplasmic maturation of the 60S subunit. Involved in the dissociation and recycling of other late pre-60S factors before newly synthesized large ribosomal subunits enter translation. Can complement the growth defect of a yeast mutant lacking REI1. Required for leaf growth under cold temperature conditions. This Arabidopsis thaliana (Mouse-ear cress) protein is Cytoplasmic 60S subunit biogenesis factor REI1 homolog 1.